Consider the following 113-residue polypeptide: Ribonuclease P protein component (113 aa).

It belongs to the RnpA family. Consists of a catalytic RNA component (M1 or rnpB) and a protein subunit.

It carries out the reaction Endonucleolytic cleavage of RNA, removing 5'-extranucleotides from tRNA precursor.. In terms of biological role, RNaseP catalyzes the removal of the 5'-leader sequence from pre-tRNA to produce the mature 5'-terminus. It can also cleave other RNA substrates such as 4.5S RNA. The protein component plays an auxiliary but essential role in vivo by binding to the 5'-leader sequence and broadening the substrate specificity of the ribozyme. In Ligilactobacillus salivarius (strain UCC118) (Lactobacillus salivarius), this protein is Ribonuclease P protein component.